Consider the following 142-residue polypeptide: Large ribosomal subunit protein uL13 (142 aa).

It belongs to the universal ribosomal protein uL13 family. Part of the 50S ribosomal subunit.

In terms of biological role, this protein is one of the early assembly proteins of the 50S ribosomal subunit, although it is not seen to bind rRNA by itself. It is important during the early stages of 50S assembly. This is Large ribosomal subunit protein uL13 from Proteus mirabilis (strain HI4320).